The sequence spans 379 residues: Mannan endo-1,4-beta-mannosidase 7 (379 aa).

Substrate contacts are provided by Trp-64 and Asn-179. Catalysis depends on Glu-180, which acts as the Proton donor. Tyr-260 serves as a coordination point for substrate. Catalysis depends on Glu-300, which acts as the Nucleophile. Position 342 (Trp-342) interacts with substrate.

It belongs to the glycosyl hydrolase 5 (cellulase A) family. As to expression, expression not detected.

The enzyme catalyses Random hydrolysis of (1-&gt;4)-beta-D-mannosidic linkages in mannans, galactomannans and glucomannans.. In Oryza sativa subsp. japonica (Rice), this protein is Mannan endo-1,4-beta-mannosidase 7 (MAN7).